The chain runs to 249 residues: 1-(5-phosphoribosyl)-5-[(5-phosphoribosylamino)methylideneamino] imidazole-4-carboxamide isomerase (249 aa).

Residue Asp8 is the Proton acceptor of the active site. Asp129 (proton donor) is an active-site residue.

The protein belongs to the HisA/HisF family.

Its subcellular location is the cytoplasm. The enzyme catalyses 1-(5-phospho-beta-D-ribosyl)-5-[(5-phospho-beta-D-ribosylamino)methylideneamino]imidazole-4-carboxamide = 5-[(5-phospho-1-deoxy-D-ribulos-1-ylimino)methylamino]-1-(5-phospho-beta-D-ribosyl)imidazole-4-carboxamide. The protein operates within amino-acid biosynthesis; L-histidine biosynthesis; L-histidine from 5-phospho-alpha-D-ribose 1-diphosphate: step 4/9. The protein is 1-(5-phosphoribosyl)-5-[(5-phosphoribosylamino)methylideneamino] imidazole-4-carboxamide isomerase of Rhizobium rhizogenes (strain K84 / ATCC BAA-868) (Agrobacterium radiobacter).